Consider the following 239-residue polypeptide: Proteasome subunit beta type-6 (239 aa).

Position 2 is an N-acetylalanine (A2). Residues 2-34 (AATLVAARGTRPAPAWGPEAIAPDWENREVSTG) constitute a propeptide, removed in mature form. T35 functions as the Nucleophile in the catalytic mechanism. Phosphothreonine is present on T69.

Belongs to the peptidase T1B family. In terms of assembly, the 26S proteasome consists of a 20S proteasome core and two 19S regulatory subunits. The 20S proteasome core is a barrel-shaped complex made of 28 subunits that are arranged in four stacked rings. The two outer rings are each formed by seven alpha subunits, and the two inner rings are formed by seven beta subunits. The proteolytic activity is exerted by three beta-subunits PSMB5, PSMB6 and PSMB7.

The protein localises to the cytoplasm. The protein resides in the nucleus. It carries out the reaction Cleavage of peptide bonds with very broad specificity.. Its function is as follows. Component of the 20S core proteasome complex involved in the proteolytic degradation of most intracellular proteins. This complex plays numerous essential roles within the cell by associating with different regulatory particles. Associated with two 19S regulatory particles, forms the 26S proteasome and thus participates in the ATP-dependent degradation of ubiquitinated proteins. The 26S proteasome plays a key role in the maintenance of protein homeostasis by removing misfolded or damaged proteins that could impair cellular functions, and by removing proteins whose functions are no longer required. Associated with the PA200 or PA28, the 20S proteasome mediates ubiquitin-independent protein degradation. This type of proteolysis is required in several pathways including spermatogenesis (20S-PA200 complex) or generation of a subset of MHC class I-presented antigenic peptides (20S-PA28 complex). Within the 20S core complex, PSMB6 displays a peptidylglutamyl-hydrolyzing activity also termed postacidic or caspase-like activity, meaning that the peptides bond hydrolysis occurs directly after acidic residues. The chain is Proteasome subunit beta type-6 (PSMB6) from Bos taurus (Bovine).